Here is an 85-residue protein sequence, read N- to C-terminus: Small ribosomal subunit protein bS16 (85 aa).

The protein belongs to the bacterial ribosomal protein bS16 family.

The protein is Small ribosomal subunit protein bS16 of Metamycoplasma arthritidis (strain 158L3-1) (Mycoplasma arthritidis).